A 585-amino-acid polypeptide reads, in one-letter code: Adenine deaminase (585 aa).

It belongs to the metallo-dependent hydrolases superfamily. Adenine deaminase family. Requires Mn(2+) as cofactor.

The catalysed reaction is adenine + H2O + H(+) = hypoxanthine + NH4(+). The chain is Adenine deaminase from Halalkalibacterium halodurans (strain ATCC BAA-125 / DSM 18197 / FERM 7344 / JCM 9153 / C-125) (Bacillus halodurans).